The sequence spans 1342 residues: DNA-directed RNA polymerase subunit beta (1342 aa).

Belongs to the RNA polymerase beta chain family. As to quaternary structure, the RNAP catalytic core consists of 2 alpha, 1 beta, 1 beta' and 1 omega subunit. When a sigma factor is associated with the core the holoenzyme is formed, which can initiate transcription.

The catalysed reaction is RNA(n) + a ribonucleoside 5'-triphosphate = RNA(n+1) + diphosphate. In terms of biological role, DNA-dependent RNA polymerase catalyzes the transcription of DNA into RNA using the four ribonucleoside triphosphates as substrates. This Photorhabdus laumondii subsp. laumondii (strain DSM 15139 / CIP 105565 / TT01) (Photorhabdus luminescens subsp. laumondii) protein is DNA-directed RNA polymerase subunit beta.